A 119-amino-acid polypeptide reads, in one-letter code: Protein TusC (119 aa).

The protein belongs to the DsrF/TusC family. Heterohexamer, formed by a dimer of trimers. The hexameric TusBCD complex contains 2 copies each of TusB, TusC and TusD. The TusBCD complex interacts with TusE.

It is found in the cytoplasm. Its function is as follows. Part of a sulfur-relay system required for 2-thiolation of 5-methylaminomethyl-2-thiouridine (mnm(5)s(2)U) at tRNA wobble positions. The protein is Protein TusC of Shigella flexneri serotype 5b (strain 8401).